Here is a 356-residue protein sequence, read N- to C-terminus: WAT1-related protein At1g68170 (356 aa).

A run of 10 helical transmembrane segments spans residues 4-24 (ITAMVVVQIATAGLNIFFKLA), 33-53 (VLVAYRLLFATLFMIPICFIF), 65-85 (LMLLALLSGLLGVVIPSILTI), 94-114 (TFTSAAGVLTPLVTFIFAALL), 125-145 (VGLAKVFGTLFGVGGALVFIF), 176-196 (ISILGALLVFGGNISISLWFL), 210-230 (WNATLMNMMGGVVAMLVALCW), 245-265 (LLTIAYAAILISGMVVAVNAW), 273-293 (LFVSVFSPVGLVIVALVGSFL), and 298-318 (LHLGSIIGTVIIVGALYIVLW). 2 consecutive EamA domains span residues 14–142 (TAGL…GALV) and 191–317 (ISLW…YIVL).

Belongs to the drug/metabolite transporter (DMT) superfamily. Plant drug/metabolite exporter (P-DME) (TC 2.A.7.4) family.

Its subcellular location is the membrane. This is WAT1-related protein At1g68170 from Arabidopsis thaliana (Mouse-ear cress).